A 195-amino-acid polypeptide reads, in one-letter code: Exosome complex component CSL4 (195 aa).

Residues Ser21 and Ser98 each carry the phosphoserine modification. The S1 motif domain occupies 66–147 (DVGAIVTCKV…AQSNYLLTTA (82 aa)).

It belongs to the CSL4 family. In terms of assembly, component of the RNA exosome core complex (Exo-9), composed of EXOSC1, EXOSC2, EXOSC3, EXOSC4, EXOSC5, EXOSC6, EXOSC7, EXOSC8 and EXOSC9; within the complex interacts with EXOSC6. The catalytically inactive RNA exosome core complex (Exo-9) associates with the catalytic subunit EXOSC10/RRP6. Exo-9 may associate with DIS3 to form the nucleolar exosome complex, or DIS3L to form the cytoplasmic exosome complex. Exo-9 is formed by a hexameric base ring consisting of the heterodimers EXOSC4-EXOSC9, EXOSC5-EXOSC8 and EXOSC6-EXOSC7, and a cap ring consisting of EXOSC1, EXOSC2 and EXOSC3. The RNA exosome complex associates with cofactors C1D/RRP47, MPHOSPH6/MPP6 and MTREX/MTR4. Interacts with DDX60.

It is found in the nucleus. It localises to the nucleolus. The protein localises to the cytoplasm. Its function is as follows. Non-catalytic component of the RNA exosome complex which has 3'-&gt;5' exoribonuclease activity and participates in a multitude of cellular RNA processing and degradation events. In the nucleus, the RNA exosome complex is involved in proper maturation of stable RNA species such as rRNA, snRNA and snoRNA, in the elimination of RNA processing by-products and non-coding 'pervasive' transcripts, such as antisense RNA species and promoter-upstream transcripts (PROMPTs), and of mRNAs with processing defects, thereby limiting or excluding their export to the cytoplasm. The RNA exosome may be involved in Ig class switch recombination (CSR) and/or Ig variable region somatic hypermutation (SHM) by targeting AICDA deamination activity to transcribed dsDNA substrates. In the cytoplasm, the RNA exosome complex is involved in general mRNA turnover and specifically degrades inherently unstable mRNAs containing AU-rich elements (AREs) within their 3' untranslated regions, and in RNA surveillance pathways, preventing translation of aberrant mRNAs. It seems to be involved in degradation of histone mRNA. The catalytic inactive RNA exosome core complex of 9 subunits (Exo-9) is proposed to play a pivotal role in the binding and presentation of RNA for ribonucleolysis, and to serve as a scaffold for the association with catalytic subunits and accessory proteins or complexes. EXOSC1 as peripheral part of the Exo-9 complex stabilizes the hexameric ring of RNase PH-domain subunits through contacts with EXOSC6 and EXOSC8. The polypeptide is Exosome complex component CSL4 (EXOSC1) (Homo sapiens (Human)).